Reading from the N-terminus, the 342-residue chain is Autoinducer 2 import system permease protein LsrC (342 aa).

Residues 1-13 (MLKFIQNNREITA) lie on the Periplasmic side of the membrane. A helical transmembrane segment spans residues 14–34 (LLAVVLLFVLPGFLDRQYLSV). Topologically, residues 35 to 38 (QTLT) are cytoplasmic. Residues 39–59 (MVYSSAQILILLAMGATLVML) traverse the membrane as a helical segment. At 60–69 (TRNIDVSVGS) the chain is on the periplasmic side. The chain crosses the membrane as a helical span at residues 70-90 (ITGMCAVLLGMLLNAGYSLPV). Residues 91–92 (AC) lie on the Cytoplasmic side of the membrane. Residues 93-113 (VATLLLGLLAGFFNGVLVAWL) traverse the membrane as a helical segment. K114 is a topological domain (periplasmic). Residues 115-135 (IPAIVATLGTLGLYRGIMLLW) traverse the membrane as a helical segment. Topologically, residues 136–154 (TGGKWIEGLPAELKQLSAP) are cytoplasmic. The helical transmembrane segment at 155-175 (LLLGVSAIGWLTIILVAFMAW) threads the bilayer. Over 176–212 (LLAKTAFGRSFYATGDNLQGARQLGVRTEAIRIVAFS) the chain is Periplasmic. A helical transmembrane segment spans residues 213–233 (LNGCMAALAGIVFASQIGFIP). Over 234–251 (NQTGTGLEMKAIAACVLG) the chain is Cytoplasmic. Residues 252-272 (GISLLGGSGAIIGAVLGAWFL) traverse the membrane as a helical segment. At 273–283 (TQIDSVLVLLR) the chain is on the periplasmic side. Residues 284–304 (IPAWWNDFIAGLVLLAVLVFD) traverse the membrane as a helical segment. Topologically, residues 305–342 (GRLRCALERNLRRQKYARFMTPPPSVKPASSGKKREAA) are cytoplasmic.

Belongs to the binding-protein-dependent transport system permease family. AraH/RbsC subfamily. The complex is composed of two ATP-binding proteins (LsrA), two transmembrane proteins (LsrC and LsrD) and a solute-binding protein (LsrB).

It localises to the cell inner membrane. In terms of biological role, part of the ABC transporter complex LsrABCD involved in autoinducer 2 (AI-2) import. Probably responsible for the translocation of the substrate across the membrane. The protein is Autoinducer 2 import system permease protein LsrC (lsrC) of Escherichia coli (strain K12 / DH10B).